The primary structure comprises 178 residues: Interleukin-10 (178 aa).

Residues methionine 1 to alanine 18 form the signal peptide. 2 disulfide bridges follow: cysteine 30–cysteine 126 and cysteine 80–cysteine 132. A glycan (N-linked (GlcNAc...) asparagine) is linked at asparagine 134.

This sequence belongs to the IL-10 family. Homodimer. Interacts with IL10RA and IL10RB.

The protein resides in the secreted. Functionally, major immune regulatory cytokine that acts on many cells of the immune system where it has profound anti-inflammatory functions, limiting excessive tissue disruption caused by inflammation. Mechanistically, IL10 binds to its heterotetrameric receptor comprising IL10RA and IL10RB leading to JAK1 and STAT2-mediated phosphorylation of STAT3. In turn, STAT3 translocates to the nucleus where it drives expression of anti-inflammatory mediators. Targets antigen-presenting cells (APCs) such as macrophages and monocytes and inhibits their release of pro-inflammatory cytokines including granulocyte-macrophage colony-stimulating factor /GM-CSF, granulocyte colony-stimulating factor/G-CSF, IL-1 alpha, IL-1 beta, IL-6, IL-8 and TNF-alpha. Also interferes with antigen presentation by reducing the expression of MHC-class II and co-stimulatory molecules, thereby inhibiting their ability to induce T cell activation. In addition, controls the inflammatory response of macrophages by reprogramming essential metabolic pathways including mTOR signaling. In Macaca nemestrina (Pig-tailed macaque), this protein is Interleukin-10 (IL10).